The sequence spans 395 residues: Ribosomal RNA large subunit methyltransferase G (395 aa).

It belongs to the methyltransferase superfamily. RlmG family.

Its subcellular location is the cytoplasm. It carries out the reaction guanosine(1835) in 23S rRNA + S-adenosyl-L-methionine = N(2)-methylguanosine(1835) in 23S rRNA + S-adenosyl-L-homocysteine + H(+). Its function is as follows. Specifically methylates the guanine in position 1835 (m2G1835) of 23S rRNA. This Yersinia pseudotuberculosis serotype O:1b (strain IP 31758) protein is Ribosomal RNA large subunit methyltransferase G.